Reading from the N-terminus, the 134-residue chain is MSYNRTLHSTTSILKMNSALQISCLLLVLGCLLGSGHGQSDAEFAAKSREISQIFGNPSVDKYTKVRNLPALVAFYEKYSSRLRLTAQEKKGIDNAIRQYRAQQNQKVDGVSAQGGTLFDILKKVVEVIIKVVV.

Residues 1–38 (MSYNRTLHSTTSILKMNSALQISCLLLVLGCLLGSGHG) form the signal peptide.

This sequence belongs to the Turandot family.

The protein localises to the secreted. Functionally, a humoral factor that may play a role in stress tolerance. The chain is Protein Turandot E from Drosophila yakuba (Fruit fly).